The sequence spans 219 residues: Thiamine-phosphate synthase (219 aa).

4-amino-2-methyl-5-(diphosphooxymethyl)pyrimidine-binding positions include 44–48 (QFREK) and asparagine 79. The Mg(2+) site is built by aspartate 80 and aspartate 99. A 4-amino-2-methyl-5-(diphosphooxymethyl)pyrimidine-binding site is contributed by serine 117. 143–145 (TST) contributes to the 2-[(2R,5Z)-2-carboxy-4-methylthiazol-5(2H)-ylidene]ethyl phosphate binding site. Lysine 146 is a 4-amino-2-methyl-5-(diphosphooxymethyl)pyrimidine binding site. Residues glycine 175 and 195 to 196 (IS) each bind 2-[(2R,5Z)-2-carboxy-4-methylthiazol-5(2H)-ylidene]ethyl phosphate.

Belongs to the thiamine-phosphate synthase family. Requires Mg(2+) as cofactor.

It catalyses the reaction 2-[(2R,5Z)-2-carboxy-4-methylthiazol-5(2H)-ylidene]ethyl phosphate + 4-amino-2-methyl-5-(diphosphooxymethyl)pyrimidine + 2 H(+) = thiamine phosphate + CO2 + diphosphate. It carries out the reaction 2-(2-carboxy-4-methylthiazol-5-yl)ethyl phosphate + 4-amino-2-methyl-5-(diphosphooxymethyl)pyrimidine + 2 H(+) = thiamine phosphate + CO2 + diphosphate. The enzyme catalyses 4-methyl-5-(2-phosphooxyethyl)-thiazole + 4-amino-2-methyl-5-(diphosphooxymethyl)pyrimidine + H(+) = thiamine phosphate + diphosphate. The protein operates within cofactor biosynthesis; thiamine diphosphate biosynthesis; thiamine phosphate from 4-amino-2-methyl-5-diphosphomethylpyrimidine and 4-methyl-5-(2-phosphoethyl)-thiazole: step 1/1. Condenses 4-methyl-5-(beta-hydroxyethyl)thiazole monophosphate (THZ-P) and 2-methyl-4-amino-5-hydroxymethyl pyrimidine pyrophosphate (HMP-PP) to form thiamine monophosphate (TMP). In Bacillus thuringiensis subsp. konkukian (strain 97-27), this protein is Thiamine-phosphate synthase.